Reading from the N-terminus, the 379-residue chain is Cytochrome b (379 aa).

The next 4 helical transmembrane spans lie at 33-53 (FGSL…FLAM), 77-98 (WTIR…FIHV), 113-133 (WNIG…GYVL), and 178-198 (FFAL…IHLL). H83 and H97 together coordinate heme b. Residues H182 and H196 each coordinate heme b. H201 lines the a ubiquinone pocket. A run of 4 helical transmembrane segments spans residues 226-246 (TKDF…TLFY), 288-308 (LGGV…PFLQ), 320-340 (LSQF…WIGG), and 347-367 (FINI…FIMP).

The protein belongs to the cytochrome b family. The cytochrome bc1 complex contains 11 subunits: 3 respiratory subunits (MT-CYB, CYC1 and UQCRFS1), 2 core proteins (UQCRC1 and UQCRC2) and 6 low-molecular weight proteins (UQCRH/QCR6, UQCRB/QCR7, UQCRQ/QCR8, UQCR10/QCR9, UQCR11/QCR10 and a cleavage product of UQCRFS1). This cytochrome bc1 complex then forms a dimer. Requires heme b as cofactor.

The protein localises to the mitochondrion inner membrane. In terms of biological role, component of the ubiquinol-cytochrome c reductase complex (complex III or cytochrome b-c1 complex) that is part of the mitochondrial respiratory chain. The b-c1 complex mediates electron transfer from ubiquinol to cytochrome c. Contributes to the generation of a proton gradient across the mitochondrial membrane that is then used for ATP synthesis. This is Cytochrome b (MT-CYB) from Lepilemur aeeclis (Sportive lemur).